Here is a 208-residue protein sequence, read N- to C-terminus: Large ribosomal subunit protein uL4 (208 aa).

The disordered stretch occupies residues arginine 45–serine 84. Residues glycine 60–glycine 71 are compositionally biased toward basic residues.

Belongs to the universal ribosomal protein uL4 family. In terms of assembly, part of the 50S ribosomal subunit.

Functionally, one of the primary rRNA binding proteins, this protein initially binds near the 5'-end of the 23S rRNA. It is important during the early stages of 50S assembly. It makes multiple contacts with different domains of the 23S rRNA in the assembled 50S subunit and ribosome. Its function is as follows. Forms part of the polypeptide exit tunnel. This is Large ribosomal subunit protein uL4 from Prosthecochloris aestuarii (strain DSM 271 / SK 413).